A 92-amino-acid polypeptide reads, in one-letter code: CRISPR-associated endoribonuclease Cas2 2 (92 aa).

Residue Asp12 coordinates Mg(2+).

This sequence belongs to the CRISPR-associated endoribonuclease Cas2 protein family. As to quaternary structure, homodimer, forms a heterotetramer with a Cas1 homodimer. The cofactor is Mg(2+).

In terms of biological role, CRISPR (clustered regularly interspaced short palindromic repeat), is an adaptive immune system that provides protection against mobile genetic elements (viruses, transposable elements and conjugative plasmids). CRISPR clusters contain sequences complementary to antecedent mobile elements and target invading nucleic acids. CRISPR clusters are transcribed and processed into CRISPR RNA (crRNA). Functions as a ssRNA-specific endoribonuclease. Involved in the integration of spacer DNA into the CRISPR cassette. The protein is CRISPR-associated endoribonuclease Cas2 2 (cas22) of Archaeoglobus fulgidus (strain ATCC 49558 / DSM 4304 / JCM 9628 / NBRC 100126 / VC-16).